Here is a 32-residue protein sequence, read N- to C-terminus: Hemocyanin C chain (32 aa).

It belongs to the tyrosinase family. Hemocyanin subfamily. In terms of tissue distribution, hemolymph.

Its subcellular location is the secreted. The protein localises to the extracellular space. In terms of biological role, hemocyanins are copper-containing oxygen carriers occurring freely dissolved in the hemolymph of many mollusks and arthropods. This Cherax destructor (Common yabby crayfish) protein is Hemocyanin C chain.